The sequence spans 472 residues: Alkaline phosphatase (472 aa).

Positions 1–21 are cleaved as a signal peptide; that stretch reads MKQSAIALALLSCLITPVSQA. Aspartate 74 is a binding site for Mg(2+). Aspartate 74 lines the Zn(2+) pocket. Serine 125 serves as the catalytic Phosphoserine intermediate. The Mg(2+) site is built by aspartate 176 and threonine 178. 2 cysteine pairs are disulfide-bonded: cysteine 191–cysteine 201 and cysteine 309–cysteine 359. Glutamate 345 contributes to the Mg(2+) binding site. Aspartate 350, histidine 354, aspartate 392, histidine 393, and histidine 435 together coordinate Zn(2+).

This sequence belongs to the alkaline phosphatase family. As to quaternary structure, homodimer. Requires Mg(2+) as cofactor. The cofactor is Zn(2+).

Its subcellular location is the periplasm. The enzyme catalyses a phosphate monoester + H2O = an alcohol + phosphate. This chain is Alkaline phosphatase (phoA), found in Escherichia fergusonii (strain ATCC 35469 / DSM 13698 / CCUG 18766 / IAM 14443 / JCM 21226 / LMG 7866 / NBRC 102419 / NCTC 12128 / CDC 0568-73).